We begin with the raw amino-acid sequence, 297 residues long: ER membrane protein complex subunit 2 (297 aa).

Alanine 2 carries the N-acetylalanine modification. TPR repeat units lie at residues 87–120 (HRVK…DPTN), 155–188 (QEAW…NPHN), and 192–225 (CQQY…NNRN). Lysine 255 bears the N6-acetyllysine mark.

Belongs to the EMC2 family. Component of the ER membrane protein complex (EMC). Interacts with WNK1 (via amphipathic alpha-helix region); promoting the ER membrane protein complex assembly by preventing EMC2 ubiquitination. Post-translationally, ubiquitinated when soluble in the cytoplasm, leading to its degradation by the proteasome. Interaction with EMC2 prevents its ubiquitination and degradation.

It is found in the endoplasmic reticulum membrane. In terms of biological role, part of the endoplasmic reticulum membrane protein complex (EMC) that enables the energy-independent insertion into endoplasmic reticulum membranes of newly synthesized membrane proteins. Preferentially accommodates proteins with transmembrane domains that are weakly hydrophobic or contain destabilizing features such as charged and aromatic residues. Involved in the cotranslational insertion of multi-pass membrane proteins in which stop-transfer membrane-anchor sequences become ER membrane spanning helices. It is also required for the post-translational insertion of tail-anchored/TA proteins in endoplasmic reticulum membranes. By mediating the proper cotranslational insertion of N-terminal transmembrane domains in an N-exo topology, with translocated N-terminus in the lumen of the ER, controls the topology of multi-pass membrane proteins like the G protein-coupled receptors. By regulating the insertion of various proteins in membranes, it is indirectly involved in many cellular processes. This is ER membrane protein complex subunit 2 from Homo sapiens (Human).